Here is a 522-residue protein sequence, read N- to C-terminus: Ankyrin repeat and death domain-containing protein 1A (522 aa).

11 ANK repeats span residues 14–43 (PLERQLHEAARQNNVGRMQELIGRRVNTRA), 47–76 (VGRVALHWAAGAGHEQAVRLLLEHEAAVDE), 90–119 (FGMNALLLSAWFGHLRILQILVNSGAKIHC), 123–152 (DGLTLLHCAAQKGHVPVLAFIMEDLEDVAL), 158–187 (LGRTAFHRAAEHGQLDALDFLVGSGCDHNV), 191–220 (EGNTALHLAAGRGHMAVLQRLVDIGLDLEE), 224–253 (EGLTALHSAAGGSHPDCVQLLLRAGSTVNA), 257–286 (KNLSCLHYAALSGSEDVSRVLIHAGGCANV), 290–319 (QGASPLHLAVRHNFPALVRLLINSDSDVNA), 323–352 (RQQTPLHLAAEHAWQDIADMLLIAGVDLNL), and 356–385 (QGKTALAVAVRSNHVSLVDMIIKADRFYRW). A Death domain is found at 413–501 (SVLWRLASRY…DLAGWSTMAR (89 aa)).

The sequence is that of Ankyrin repeat and death domain-containing protein 1A (ANKDD1A) from Homo sapiens (Human).